The following is a 515-amino-acid chain: Cytochrome P450 monooxygenase janP (515 aa).

Residues 20–36 traverse the membrane as a helical segment; that stretch reads GFLWKYAAFMVFIYLLL. Cys456 serves as a coordination point for heme. N-linked (GlcNAc...) asparagine glycosylation is present at Asn501.

Belongs to the cytochrome P450 family. Heme is required as a cofactor.

It localises to the membrane. The protein operates within secondary metabolite biosynthesis. In terms of biological role, cytochrome P450 monooxygenase; part of the gene cluster that mediates the biosynthesis of the indole diterpenes janthitremanes such as shearinine K or shearinine A. The geranylgeranyl diphosphate (GGPP) synthase janG catalyzes the first step in janthitremane biosynthesis via conversion of farnesyl pyrophosphate and isopentyl pyrophosphate into geranylgeranyl pyrophosphate (GGPP). Condensation of indole-3-glycerol phosphate with GGPP by the prenyl transferase janC then forms 3-geranylgeranylindole (3-GGI). Epoxidation by the FAD-dependent monooxygenase janM leads to a epoxidized-GGI that is substrate of the terpene cyclase janB for cyclization to yield paspaline. Paspaline is subsequently converted to 13-desoxypaspaline by the cytochrome P450 monooxygenase janP, via beta-PC-M6 in a series of alpha-face oxidations. The cytochrome P450 monooxygenase janQ is proposed to carry out sequential beta-face oxidation steps at C-7 and C-13 of 13-desoxypaspaline to form paspalicine and paspalinine respectively. The indole diterpene prenyltransferase janD may then convert paspalinine into shearinine K which is substrate of janO and/or additional enzymes for oxidation and cyclization to generate shearinine A. This chain is Cytochrome P450 monooxygenase janP, found in Penicillium janthinellum (Penicillium vitale).